Here is a 256-residue protein sequence, read N- to C-terminus: Imidazole glycerol phosphate synthase subunit HisF (256 aa).

Active-site residues include D12 and D131.

It belongs to the HisA/HisF family. In terms of assembly, heterodimer of HisH and HisF.

It localises to the cytoplasm. It carries out the reaction 5-[(5-phospho-1-deoxy-D-ribulos-1-ylimino)methylamino]-1-(5-phospho-beta-D-ribosyl)imidazole-4-carboxamide + L-glutamine = D-erythro-1-(imidazol-4-yl)glycerol 3-phosphate + 5-amino-1-(5-phospho-beta-D-ribosyl)imidazole-4-carboxamide + L-glutamate + H(+). Its pathway is amino-acid biosynthesis; L-histidine biosynthesis; L-histidine from 5-phospho-alpha-D-ribose 1-diphosphate: step 5/9. IGPS catalyzes the conversion of PRFAR and glutamine to IGP, AICAR and glutamate. The HisF subunit catalyzes the cyclization activity that produces IGP and AICAR from PRFAR using the ammonia provided by the HisH subunit. The protein is Imidazole glycerol phosphate synthase subunit HisF of Pseudomonas paraeruginosa (strain DSM 24068 / PA7) (Pseudomonas aeruginosa (strain PA7)).